A 3387-amino-acid polypeptide reads, in one-letter code: Genome polyprotein (3387 aa).

At M1–S100 the chain is on the cytoplasmic side. A hydrophobic; homodimerization of capsid protein C region spans residues L36–L71. Residues S100–A113 constitute a propeptide, ER anchor for the capsid protein C, removed in mature form by serine protease NS3. A helical membrane pass occupies residues T101–S117. Over T118 to E237 the chain is Extracellular. N182 is a glycosylation site (N-linked (GlcNAc...) asparagine; by host). The helical transmembrane segment at S238–G258 threads the bilayer. The Cytoplasmic segment spans residues Q259–T265. The chain crosses the membrane as a helical span at residues V266–G279. Residues M280 to T725 are Extracellular-facing. 4 cysteine pairs are disulfide-bonded: C282–C309, C339–C400, C353–C384, and C371–C395. Residue N346 is glycosylated (N-linked (GlcNAc...) asparagine; by host). Residues D377 to G390 form a fusion peptide region. The N-linked (GlcNAc...) asparagine; by host glycan is linked to N432. Intrachain disulfides connect C464–C564 and C581–C612. The chain crosses the membrane as a helical span at residues M726–G746. Residues T747–N751 lie on the Cytoplasmic side of the membrane. The chain crosses the membrane as a helical span at residues T752 to V772. At Q773 to R1193 the chain is on the extracellular side. 6 disulfides stabilise this stretch: C778/C789, C829/C917, C953/C997, C1054/C1103, C1065/C1087, and C1086/C1090. 2 N-linked (GlcNAc...) asparagine; by host glycosylation sites follow: N904 and N981. A helical transmembrane segment spans residues V1194–L1218. Residues R1219–R1224 are Lumenal-facing. The helical transmembrane segment at E1225–H1243 threads the bilayer. Residues D1244 to N1267 are Cytoplasmic-facing. A helical membrane pass occupies residues T1268–M1288. A topological domain (lumenal) is located at residue A1289. Residues W1290–T1308 form a helical membrane-spanning segment. The Lumenal segment spans residues S1309–H1316. A helical transmembrane segment spans residues W1317–L1337. At M1338–S1345 the chain is on the cytoplasmic side. The chain crosses the membrane as a helical span at residues W1346–L1366. Residues K1367 to D1369 lie on the Lumenal side of the membrane. A helical transmembrane segment spans residues V1370–G1390. Residues S1391 to K1444 lie on the Cytoplasmic side of the membrane. The interacts with and activates NS3 protease stretch occupies residues L1397–T1436. The helical intramembrane region spans L1445–W1465. Residues Y1466 to T2146 lie on the Cytoplasmic side of the membrane. A Peptidase S7 domain is found at S1475 to V1652. Residues H1525, D1549, and S1609 each act as charge relay system; for serine protease NS3 activity in the active site. A Helicase ATP-binding domain is found at E1654–E1810. The interval R1658–R1661 is important for RNA-binding. L1667 to T1674 is a binding site for ATP. The DEAH box signature appears at D1758 to H1761. Residues T1820 to R1987 form the Helicase C-terminal domain. The residue at position 1862 (K1862) is an N6-acetyllysine; by host. The chain crosses the membrane as a helical span at residues L2147 to G2167. Residues K2168 to G2169 are Lumenal-facing. The helical intramembrane region spans I2170–A2190. E2191 is a topological domain (lumenal). A helical membrane pass occupies residues I2192–I2212. Residues P2213–Q2225 are Cytoplasmic-facing. A helical membrane pass occupies residues L2226–G2246. At L2247–D2270 the chain is on the lumenal side. The helical intramembrane region spans L2271–L2291. The Lumenal segment spans residues R2292–N2301. N-linked (GlcNAc...) asparagine; by host glycans are attached at residues N2297 and N2301. The segment at residues L2302–P2322 is an intramembrane region (helical). The Lumenal portion of the chain corresponds to L2323 to P2343. A helical transmembrane segment spans residues T2344–L2364. The Cytoplasmic segment spans residues Q2365–Q2409. The chain crosses the membrane as a helical span at residues V2410–C2430. The Lumenal segment spans residues E2431–T2455. The N-linked (GlcNAc...) asparagine; by host glycan is linked to N2453. A helical membrane pass occupies residues I2456–F2476. Over S2477–L3387 the chain is Cytoplasmic. The mRNA cap 0-1 NS5-type MT domain occupies T2489 to S2751. S2543 lines the S-adenosyl-L-methionine pocket. S2543 is subject to Phosphoserine. K2548 functions as the For 2'-O-MTase activity in the catalytic mechanism. The SUMO-interacting motif signature appears at V2564–L2567. Positions 2573, 2574, 2591, 2592, 2618, and 2619 each coordinate S-adenosyl-L-methionine. D2633 (for 2'-O-MTase activity) is an active-site residue. An S-adenosyl-L-methionine-binding site is contributed by I2634. Active-site for 2'-O-MTase activity residues include K2668 and E2704. Residue Y2706 coordinates S-adenosyl-L-methionine. Zn(2+) is bound by residues E2925, H2929, C2934, and C2937. A RdRp catalytic domain is found at L3016–L3166. Zn(2+) contacts are provided by H3200, C3216, and C3335.

In the N-terminal section; belongs to the class I-like SAM-binding methyltransferase superfamily. mRNA cap 0-1 NS5-type methyltransferase family. Homodimer. Interacts (via N-terminus) with host EXOC1 (via C-terminus); this interaction results in EXOC1 degradation through the proteasome degradation pathway. In terms of assembly, forms heterodimers with envelope protein E in the endoplasmic reticulum and Golgi. As to quaternary structure, homodimer; in the endoplasmic reticulum and Golgi. Interacts with protein prM. Interacts with non-structural protein 1. Homodimer; Homohexamer when secreted. Interacts with envelope protein E. In terms of assembly, interacts (via N-terminus) with serine protease NS3. As to quaternary structure, forms a heterodimer with serine protease NS3. May form homooligomers. Forms a heterodimer with NS2B. Interacts with NS4B. Interacts with unphosphorylated RNA-directed RNA polymerase NS5; this interaction stimulates RNA-directed RNA polymerase NS5 guanylyltransferase activity. Interacts with host SHFL. In terms of assembly, interacts with host MAVS; this interaction inhibits the synthesis of IFN-beta. Interacts with host SHFL. Interacts with host AUP1; the interaction occurs in the presence of Dengue virus NS4B and induces lipophagy which facilitates production of virus progeny particles. As to quaternary structure, interacts with serine protease NS3. Homodimer. Interacts with host STAT2; this interaction inhibits the phosphorylation of the latter, and, when all viral proteins are present (polyprotein), targets STAT2 for degradation. Interacts with serine protease NS3. Interacts with host PAF1 complex; the interaction may prevent the recruitment of the PAF1 complex to interferon-responsive genes, and thus reduces the immune response. Post-translationally, specific enzymatic cleavages in vivo yield mature proteins. Cleavages in the lumen of endoplasmic reticulum are performed by host signal peptidase, whereas cleavages in the cytoplasmic side are performed by serine protease NS3. Signal cleavage at the 2K-4B site requires a prior NS3 protease-mediated cleavage at the 4A-2K site. Cleaved in post-Golgi vesicles by a host furin, releasing the mature small envelope protein M, and peptide pr. This cleavage is incomplete as up to 30% of viral particles still carry uncleaved prM. In terms of processing, N-glycosylated. Post-translationally, N-glycosylated. The excreted form is glycosylated and this is required for efficient secretion of the protein from infected cells. Acetylated by host KAT5. Acetylation modulates NS3 RNA-binding and unwinding activities and plays an important positive role for viral replication. In terms of processing, sumoylation of RNA-directed RNA polymerase NS5 increases NS5 protein stability allowing proper viral RNA replication. Post-translationally, phosphorylated on serines residues. This phosphorylation may trigger NS5 nuclear localization.

It localises to the virion. Its subcellular location is the host nucleus. The protein localises to the host cytoplasm. The protein resides in the host perinuclear region. It is found in the secreted. It localises to the virion membrane. Its subcellular location is the host endoplasmic reticulum membrane. The protein localises to the host mitochondrion. It carries out the reaction Selective hydrolysis of -Xaa-Xaa-|-Yaa- bonds in which each of the Xaa can be either Arg or Lys and Yaa can be either Ser or Ala.. The enzyme catalyses RNA(n) + a ribonucleoside 5'-triphosphate = RNA(n+1) + diphosphate. It catalyses the reaction a ribonucleoside 5'-triphosphate + H2O = a ribonucleoside 5'-diphosphate + phosphate + H(+). The catalysed reaction is ATP + H2O = ADP + phosphate + H(+). It carries out the reaction a 5'-end (5'-triphosphoguanosine)-ribonucleoside in mRNA + S-adenosyl-L-methionine = a 5'-end (N(7)-methyl 5'-triphosphoguanosine)-ribonucleoside in mRNA + S-adenosyl-L-homocysteine. The enzyme catalyses a 5'-end (N(7)-methyl 5'-triphosphoguanosine)-ribonucleoside in mRNA + S-adenosyl-L-methionine = a 5'-end (N(7)-methyl 5'-triphosphoguanosine)-(2'-O-methyl-ribonucleoside) in mRNA + S-adenosyl-L-homocysteine + H(+). Functionally, plays a role in virus budding by binding to the cell membrane and gathering the viral RNA into a nucleocapsid that forms the core of a mature virus particle. During virus entry, may induce genome penetration into the host cytoplasm after hemifusion induced by the surface proteins. Can migrate to the cell nucleus where it modulates host functions. Overcomes the anti-viral effects of host EXOC1 by sequestering and degrading the latter through the proteasome degradation pathway. In terms of biological role, inhibits RNA silencing by interfering with host Dicer. Its function is as follows. Prevents premature fusion activity of envelope proteins in trans-Golgi by binding to envelope protein E at pH6.0. After virion release in extracellular space, gets dissociated from E dimers. Acts as a chaperone for envelope protein E during intracellular virion assembly by masking and inactivating envelope protein E fusion peptide. prM is the only viral peptide matured by host furin in the trans-Golgi network probably to avoid catastrophic activation of the viral fusion activity in acidic Golgi compartment prior to virion release. prM-E cleavage is inefficient, and many virions are only partially matured. These uncleaved prM would play a role in immune evasion. Functionally, may play a role in virus budding. Exerts cytotoxic effects by activating a mitochondrial apoptotic pathway through M ectodomain. May display a viroporin activity. In terms of biological role, binds to host cell surface receptor and mediates fusion between viral and cellular membranes. Envelope protein is synthesized in the endoplasmic reticulum in the form of heterodimer with protein prM. They play a role in virion budding in the ER, and the newly formed immature particle is covered with 60 spikes composed of heterodimer between precursor prM and envelope protein E. The virion is transported to the Golgi apparatus where the low pH causes dissociation of PrM-E heterodimers and formation of E homodimers. prM-E cleavage is inefficient, and many virions are only partially matured. These uncleaved prM would play a role in immune evasion. Its function is as follows. Involved in immune evasion, pathogenesis and viral replication. Once cleaved off the polyprotein, is targeted to three destinations: the viral replication cycle, the plasma membrane and the extracellular compartment. Essential for viral replication. Required for formation of the replication complex and recruitment of other non-structural proteins to the ER-derived membrane structures. Excreted as a hexameric lipoparticle that plays a role against host immune response. Antagonizing the complement function. Binds to the host macrophages and dendritic cells. Inhibits signal transduction originating from Toll-like receptor 3 (TLR3). Disrupts the host endothelial glycocalyx layer of host pulmonary microvascular endothelial cells, inducing degradation of sialic acid and shedding of heparan sulfate proteoglycans. NS1 induces expression of sialidases, heparanase, and activates cathepsin L, which activates heparanase via enzymatic cleavage. These effects are probably linked to the endothelial hyperpermeability observed in severe dengue disease. Functionally, component of the viral RNA replication complex that functions in virion assembly and antagonizes the host immune response. In terms of biological role, required cofactor for the serine protease function of NS3. May have membrane-destabilizing activity and form viroporins. Its function is as follows. Displays three enzymatic activities: serine protease, NTPase and RNA helicase. NS3 serine protease, in association with NS2B, performs its autocleavage and cleaves the polyprotein at dibasic sites in the cytoplasm: C-prM, NS2A-NS2B, NS2B-NS3, NS3-NS4A, NS4A-2K and NS4B-NS5. NS3 RNA helicase binds RNA and unwinds dsRNA in the 3' to 5' direction. Regulates the ATPase activity of the NS3 helicase activity. NS4A allows NS3 helicase to conserve energy during unwinding. Plays a role in the inhibition of the host innate immune response. Interacts with host MAVS and thereby prevents the interaction between RIGI and MAVS. In turn, IFN-beta production is impaired. Interacts with host AUP1 which mediates induction of lipophagy in host cells and facilitates production of virus progeny particles. Functionally, functions as a signal peptide for NS4B and is required for the interferon antagonism activity of the latter. In terms of biological role, induces the formation of ER-derived membrane vesicles where the viral replication takes place. Inhibits interferon (IFN)-induced host STAT1 phosphorylation and nuclear translocation, thereby preventing the establishment of cellular antiviral state by blocking the IFN-alpha/beta pathway. Its function is as follows. Replicates the viral (+) and (-) RNA genome, and performs the capping of genomes in the cytoplasm. NS5 methylates viral RNA cap at guanine N-7 and ribose 2'-O positions. Besides its role in RNA genome replication, also prevents the establishment of cellular antiviral state by blocking the interferon-alpha/beta (IFN-alpha/beta) signaling pathway. Inhibits host TYK2 and STAT2 phosphorylation, thereby preventing activation of JAK-STAT signaling pathway. May reduce immune responses by preventing the recruitment of the host PAF1 complex to interferon-responsive genes. This Aedes aegypti (Yellowfever mosquito) protein is Genome polyprotein.